The sequence spans 239 residues: uncharacterized protein (239 aa).

An N-terminal signal peptide occupies residues 1 to 23 (MKTMVAMLLAAVGVAVSASSTLA). Residues 220-230 (AHPKQTLRDQR) are compositionally biased toward basic and acidic residues. The segment at 220-239 (AHPKQTLRDQRPAGGDEITK) is disordered.

This is an uncharacterized protein from Sinorhizobium fredii (strain NBRC 101917 / NGR234).